Consider the following 915-residue polypeptide: DNA repair-scaffolding protein (915 aa).

Basic residues predominate over residues 1–15 (MPRGSRARGSKRKRS). Disordered regions lie at residues 1-30 (MPRG…RPLQ) and 56-114 (FQNT…EDKT). Over residues 56–65 (FQNTSGNPSL) the composition is skewed to polar residues. The segment covering 67 to 85 (AEEKTITEKHLELCPRPKQ) has biased composition (basic and acidic residues). Residues 86–107 (ETTTSKSTSGLTDITWSSSGSD) show a composition bias toward polar residues. Residues 151-450 (EISDCASCAS…GTAWTHGHKE (300 aa)) are necessary for interaction with RAD51.

In terms of assembly, found in a complex, at least composed of BLM, RAD51 and SPIDR; the complex formation is mediated by SPIDR. Interacts (via C-terminal region) with BLM; the interaction is direct. Interacts with RAD51; the interaction is direct. Interacts (via the C-terminal region) with FIGNL1 (via N-terminal one-half region); the interaction is direct.

Its subcellular location is the nucleus. In terms of biological role, plays a role in DNA double-strand break (DBS) repair via homologous recombination (HR). Serves as a scaffolding protein that helps to promote the recruitment of DNA-processing enzymes like the helicase BLM and recombinase RAD51 to site of DNA damage, and hence contributes to maintain genomic integrity. The chain is DNA repair-scaffolding protein (SPIDR) from Homo sapiens (Human).